A 1073-amino-acid chain; its full sequence is MKTLLLDLALWSLLFQPGWLSFSSQVSQNCHNGSYEISVLMMGNSAFAEPLKNLEDAVNEGLEIVRGRLQNAGLNVTVNATFMYSDGLIHNSGDCRSSTCEGLDLLRKISNAQRMGCVLIGPSCTYSTFQMYLDTELSYPMISAGSFGLSCDYKETLTRLMSPARKLMYFLVNFWKTNDLPFKTYSWSTSYVYKNGTETEDCFWYLNALEASVSYFSHELGFKVVLRQDKEFQDILMDHNRKSNVIIMCGGPEFLYKLKGDRAVAEDIVIILVDLFNDQYFEDNVTAPDYMKNVLVLTLSPGNSLLNSSFSRNLSPTKRDFALAYLNGILLFGHMLKIFLENGENITTPKFAHAFRNLTFEGYDGPVTLDDWGDVDSTMVLLYTSVDTKKYKVLLTYDTHVNKTYPVDMSPTFTWKNSKLPNDITGRGPQILMIAVFTLTGAVVLLLLVALLMLRKYRKDYELRQKKWSHIPPENIFPLETNETNHVSLKIDDDKRRDTIQRLRQCKYDKKRVILKDLKHNDGNFTEKQKIELNKLLQIDYYNLTKFYGTVKLDTMIFGVIEYCERGSLREVLNDTISYPDGTFMDWEFKISVLYDIAKGMSYLHSSKTEVHGRLKSTNCVVDSRMVVKITDFGCNSILPPKKDLWTAPEHLRQANISQKGDVYSYGIIAQEIILRKETFYTLSCRDRNEKIFRVENSNGMKPFRPDLFLETAEEKELEVYLLVKNCWEEDPEKRPDFKKIETTLAKIFGLFHDQKNESYMDTLIRRLQLYSRNLEHLVEERTQLYKAERDRADRLNFMLLPRLVVKSLKEKGFVEPELYEEVTIYFSDIVGFTTICKYSTPMEVVDMLNDIYKSFDHIVDHHDVYKVETIGDAYMVASGLPKRNGNRHAIDIAKMALEILSFMGTFELEHLPGLPIWIRIGVHSGPCAAGVVGIKMPRYCLFGDTVNTASRMESTGLPLRIHVSGSTIAILKRTECQFLYEVRGETYLKGRGNETTYWLTGMKDQKFNLPTPPTVENQQRLQAEFSDMIANSLQKRQAAGIRSQKPRRVASYKKGTLEYLQLNTTDKESTYF.

An N-terminal signal peptide occupies residues 1-23; sequence MKTLLLDLALWSLLFQPGWLSFS. Over 24–430 the chain is Extracellular; it reads SQVSQNCHNG…PNDITGRGPQ (407 aa). Asn32, Asn75, Asn79, Asn195, Asn284, Asn307, Asn345, and Asn402 each carry an N-linked (GlcNAc...) asparagine glycan. Residues 431-454 traverse the membrane as a helical segment; it reads ILMIAVFTLTGAVVLLLLVALLML. At 455 to 1073 the chain is on the cytoplasmic side; that stretch reads RKYRKDYELR…NTTDKESTYF (619 aa). One can recognise a Protein kinase domain in the interval 489–749; sequence LKIDDDKRRD…KIETTLAKIF (261 aa). In terms of domain architecture, Guanylate cyclase spans 824-954; it reads TIYFSDIVGF…DTVNTASRME (131 aa).

This sequence belongs to the adenylyl cyclase class-4/guanylyl cyclase family. In terms of assembly, homotrimer. Interacts via its C-terminal region with NHERF4. Interacts with the lectin chaperone VIP36. Post-translationally, glycosylation at Asn-75 and/or Asn-79 is required for interaction with VIP36 while glycosylation at Asn-345 and Asn-402 modulates ligand-mediated GUCY2C activation.

It localises to the cell membrane. The protein resides in the endoplasmic reticulum membrane. The catalysed reaction is GTP = 3',5'-cyclic GMP + diphosphate. Functionally, guanylyl cyclase that catalyzes synthesis of cyclic GMP (cGMP) from GTP. Receptor for the E.coli heat-stable enterotoxin; E.coli enterotoxin markedly stimulates the accumulation of cGMP in mammalian cells expressing GUCY2C. Also activated by the endogenous peptides guanylin and uroguanylin. The sequence is that of Guanylyl cyclase C from Homo sapiens (Human).